Here is a 347-residue protein sequence, read N- to C-terminus: Autoinducer 2 import system permease protein LsrC (347 aa).

The next 9 membrane-spanning stretches (helical) occupy residues 14-34 (LLAI…YLSV), 39-59 (MVFS…MVML), 72-92 (GMCA…PVAC), 93-113 (LATL…VAWL), 115-135 (IPAI…MLLW), 155-175 (VFLG…LMAW), 213-233 (LNGG…GFIP), 249-269 (VLGG…ILGA), and 284-304 (IPAW…LVFD).

It belongs to the binding-protein-dependent transport system permease family. AraH/RbsC subfamily. In terms of assembly, the complex is composed of two ATP-binding proteins (LsrA), two transmembrane proteins (LsrC and LsrD) and a solute-binding protein (LsrB).

It is found in the cell inner membrane. In terms of biological role, part of the ABC transporter complex LsrABCD involved in autoinducer 2 (AI-2) import. Probably responsible for the translocation of the substrate across the membrane. In Salmonella typhi, this protein is Autoinducer 2 import system permease protein LsrC (lsrC).